We begin with the raw amino-acid sequence, 459 residues long: Ammonium transporter Rh type B (459 aa).

The Cytoplasmic segment spans residues 1-10 (MAESTNLRLR). The helical transmembrane segment at 11 to 31 (LPLICIILEVILIILFGVLVE) threads the bilayer. Over 32–58 (YNDDTDAKKWNKNNSTDPATNEFYYRY) the chain is Extracellular. The N-linked (GlcNAc...) asparagine glycan is linked to N45. Residues 59 to 79 (PSFQDVHVMIFVGFGFLMTFL) traverse the membrane as a helical segment. Topologically, residues 80–87 (QRYGFSSM) are cytoplasmic. The chain crosses the membrane as a helical span at residues 88-108 (GFNFLIAAFSLQWATLMQGFF). Residues 109–121 (HGMHHGKIHVGVT) lie on the Extracellular side of the membrane. A helical membrane pass occupies residues 122–142 (SMINADFCTGAVLISFGAVLG). The Cytoplasmic segment spans residues 143 to 149 (KTSPVQL). Residues 150-170 (LVMAILEVTLFAVNEYILLSI) traverse the membrane as a helical segment. Residues 171–176 (LGANDA) are Extracellular-facing. Residues 177–197 (GGSMTIHTFGAYFGLMVTRIL) traverse the membrane as a helical segment. At 198 to 216 (HRPNLDKSKHKNSSVYHSD) the chain is on the cytoplasmic side. A helical membrane pass occupies residues 217 to 237 (LFAMIGTIFLWMFWPSFNSAI). At 238-248 (TQYGDPQHRTA) the chain is on the extracellular side. The helical transmembrane segment at 249 to 269 (ANTYYSLAACTLATFGFSSLV) threads the bilayer. Residues 270–274 (NPEGK) lie on the Cytoplasmic side of the membrane. Residues 275-295 (LDMVHIQNAALAGGVAVGTAG) form a helical membrane-spanning segment. E296 is a topological domain (extracellular). The chain crosses the membrane as a helical span at residues 297–317 (MMLTPFGSMIVGFLAGTISVL). Residues 318–340 (GYKYLTPFMESKLKIQDTCGIHN) are Cytoplasmic-facing. The chain crosses the membrane as a helical span at residues 341 to 361 (LHGMPGILGAIVGAVTAALAS). The Extracellular portion of the chain corresponds to 362–392 (RDVYGNGLDKVFLEAADNSQWSAQTKGGFQA). The helical transmembrane segment at 393-413 (ISLAVTLGIALIGGLITGFLL) threads the bilayer. The Cytoplasmic portion of the chain corresponds to 414-459 (KLPIYGTPPDTQCFEDAVYWEVPGEEEDHHELNEVSTQNEVEKLNS). Residues 440-459 (EDHHELNEVSTQNEVEKLNS) are disordered.

Belongs to the ammonium transporter (TC 2.A.49) family. Rh subfamily.

It localises to the basolateral cell membrane. The protein resides in the cytoplasmic vesicle membrane. Functions as an ammonia transporter. May play a role in the elimination of ammonia in the gill. The sequence is that of Ammonium transporter Rh type B (rhbg) from Danio rerio (Zebrafish).